The primary structure comprises 591 residues: Mono(ADP-ribosyl)transferase SpvB (591 aa).

The region spanning Pro-373–Asp-576 is the TR mART core domain. Residues Arg-414 and Arg-471–Lys-477 contribute to the NAD(+) site. Residues Arg-471, Ser-501, and Glu-538 contribute to the active site. Glu-538 serves as a coordination point for NAD(+).

It belongs to the SpvB family.

The protein resides in the secreted. The enzyme catalyses L-arginyl-[protein] + NAD(+) = N(omega)-(ADP-D-ribosyl)-L-arginyl-[protein] + nicotinamide + H(+). Its activity is regulated as follows. Inhibited by novobiocin. In terms of biological role, mono-ADP-ribosylates eukaryotic muscle and non-muscle actin on 'Arg-177'. ADP-ribosylates all actins tested, has more activity on nonmuscle beta/gamma-actin than on muscle alpha-actin. Prefers monomeric G-actin but can weakly ADP-ribosylate F-actin. ADP-ribosylation prevents the polymerization of G-actin to F-actin, causing actin filament depolymerization, destruction of the cytoskeleton and cytotoxicity. Does not possess NAD(+)-glycohydrolase activity, unlike most mART enzymes. This chain is Mono(ADP-ribosyl)transferase SpvB (spvB), found in Salmonella typhimurium.